Consider the following 367-residue polypeptide: Glutamate 5-kinase (367 aa).

Lys10 lines the ATP pocket. Positions 50, 137, and 149 each coordinate substrate. Residues 169–170 (TD) and 211–217 (TGGMSTK) each bind ATP. The PUA domain occupies 275 to 353 (AGEITVDEGA…QQIDAILGYE (79 aa)).

It belongs to the glutamate 5-kinase family.

The protein localises to the cytoplasm. It catalyses the reaction L-glutamate + ATP = L-glutamyl 5-phosphate + ADP. It functions in the pathway amino-acid biosynthesis; L-proline biosynthesis; L-glutamate 5-semialdehyde from L-glutamate: step 1/2. Catalyzes the transfer of a phosphate group to glutamate to form L-glutamate 5-phosphate. This chain is Glutamate 5-kinase, found in Salmonella paratyphi A (strain ATCC 9150 / SARB42).